The following is a 192-amino-acid chain: uncharacterized protein (192 aa).

The Nudix hydrolase domain occupies 29–160 (QRQAAVLIPV…PLDVYRRGNS (132 aa)). The Nudix box motif lies at 67–89 (GAVDSTDASLIAAALREAQEEVA). Mg(2+) is bound by residues E83 and E87.

It belongs to the Nudix hydrolase family. PCD1 subfamily. Mn(2+) is required as a cofactor. Requires Mg(2+) as cofactor.

Functionally, probably mediates the hydrolysis of some nucleoside diphosphate derivatives. This is an uncharacterized protein from Salmonella newport (strain SL254).